The following is a 544-amino-acid chain: Chaperonin GroEL 1 (544 aa).

ATP is bound by residues Thr-30–Pro-33, Asp-87–Thr-91, Gly-415, Asn-480–Ala-482, and Asp-496.

This sequence belongs to the chaperonin (HSP60) family. Forms a cylinder of 14 subunits composed of two heptameric rings stacked back-to-back. Interacts with the co-chaperonin GroES.

It localises to the cytoplasm. It carries out the reaction ATP + H2O + a folded polypeptide = ADP + phosphate + an unfolded polypeptide.. Its function is as follows. Together with its co-chaperonin GroES, plays an essential role in assisting protein folding. The GroEL-GroES system forms a nano-cage that allows encapsulation of the non-native substrate proteins and provides a physical environment optimized to promote and accelerate protein folding. This is Chaperonin GroEL 1 from Polaromonas naphthalenivorans (strain CJ2).